Here is a 221-residue protein sequence, read N- to C-terminus: DNA mismatch repair protein MutH (221 aa).

Belongs to the MutH family.

It localises to the cytoplasm. Functionally, sequence-specific endonuclease that cleaves unmethylated GATC sequences. It is involved in DNA mismatch repair. This chain is DNA mismatch repair protein MutH, found in Vibrio cholerae serotype O1 (strain ATCC 39541 / Classical Ogawa 395 / O395).